Here is a 988-residue protein sequence, read N- to C-terminus: Mediator of RNA polymerase II transcription subunit 24 (988 aa).

6 consecutive short sequence motifs (LXXLL motif) follow at residues 128–132 (LNWLL), 341–345 (LTPLL), 445–449 (LDLLL), 555–559 (LVALL), 786–790 (LPSLL), and 856–860 (LMRLL).

The protein belongs to the Mediator complex subunit 24 family. As to quaternary structure, component of the Mediator complex.

The protein localises to the nucleus. Functionally, component of the Mediator complex, a coactivator involved in the regulated transcription of nearly all RNA polymerase II-dependent genes. Mediator functions as a bridge to convey information from gene-specific regulatory proteins to the basal RNA polymerase II transcription machinery. Mediator is recruited to promoters by direct interactions with regulatory proteins and serves as a scaffold for the assembly of a functional preinitiation complex with RNA polymerase II and the general transcription factors. The chain is Mediator of RNA polymerase II transcription subunit 24 (med24) from Xenopus laevis (African clawed frog).